A 73-amino-acid polypeptide reads, in one-letter code: Large ribosomal subunit protein bL31 (73 aa).

This sequence belongs to the bacterial ribosomal protein bL31 family. Type A subfamily. Part of the 50S ribosomal subunit.

Binds the 23S rRNA. The polypeptide is Large ribosomal subunit protein bL31 (Sinorhizobium fredii (strain NBRC 101917 / NGR234)).